The primary structure comprises 365 residues: Formamidopyrimidine-DNA glycosylase (365 aa).

Proline 2 (schiff-base intermediate with DNA) is an active-site residue. Glutamate 3 (proton donor) is an active-site residue. The Proton donor; for beta-elimination activity role is filled by lysine 61. Positions 121 to 150 (RGRLAGHGDGMDGTSRTGSTLPGTGGTENS) are disordered. Residues 134-150 (TSRTGSTLPGTGGTENS) are compositionally biased toward polar residues. DNA is bound by residues histidine 186, arginine 205, and arginine 246. The FPG-type zinc-finger motif lies at 331-365 (RVYGRGGQPCRHCGTTLATAQVAGRTTVFCPQCQR). The active-site Proton donor; for delta-elimination activity is the arginine 355.

It belongs to the FPG family. As to quaternary structure, monomer. Zn(2+) is required as a cofactor.

It carries out the reaction Hydrolysis of DNA containing ring-opened 7-methylguanine residues, releasing 2,6-diamino-4-hydroxy-5-(N-methyl)formamidopyrimidine.. The enzyme catalyses 2'-deoxyribonucleotide-(2'-deoxyribose 5'-phosphate)-2'-deoxyribonucleotide-DNA = a 3'-end 2'-deoxyribonucleotide-(2,3-dehydro-2,3-deoxyribose 5'-phosphate)-DNA + a 5'-end 5'-phospho-2'-deoxyribonucleoside-DNA + H(+). Functionally, involved in base excision repair of DNA damaged by oxidation or by mutagenic agents. Acts as a DNA glycosylase that recognizes and removes damaged bases. Has a preference for oxidized purines, such as 7,8-dihydro-8-oxoguanine (8-oxoG). Has AP (apurinic/apyrimidinic) lyase activity and introduces nicks in the DNA strand. Cleaves the DNA backbone by beta-delta elimination to generate a single-strand break at the site of the removed base with both 3'- and 5'-phosphates. The chain is Formamidopyrimidine-DNA glycosylase from Nitratidesulfovibrio vulgaris (strain ATCC 29579 / DSM 644 / CCUG 34227 / NCIMB 8303 / VKM B-1760 / Hildenborough) (Desulfovibrio vulgaris).